A 496-amino-acid polypeptide reads, in one-letter code: 7,8-epoxymelianol synthase CYP88A154 (496 aa).

The helical transmembrane segment at 11–31 threads the bilayer; the sequence is FNFLWLILAIFVGTYVVLFGF. A heme-binding site is contributed by Cys444.

This sequence belongs to the cytochrome P450 family. It depends on heme as a cofactor.

It is found in the membrane. It carries out the reaction melianol + reduced [NADPH--hemoprotein reductase] + O2 = 7,8-epoxymelianol + oxidized [NADPH--hemoprotein reductase] + H2O + H(+). The protein operates within secondary metabolite biosynthesis; terpenoid biosynthesis. In terms of biological role, monooxygenase involved in the biosynthesis of glabretanes, limonoids and quassinoids triterpene natural products such as ailanthone, chaparrinone, glaucarubinone and amarolide, allelopathic degraded triterpene lactones inhibiting the growth of other plants, and possessing antimalarial, antifeedant, insecticidal, anti-inflammatory and anticancer activities. Catalyzes the epoxidation of melianol to produce 7,8-epoxymelianol. The chain is 7,8-epoxymelianol synthase CYP88A154 from Ailanthus altissima (Tree-of-heaven).